A 278-amino-acid chain; its full sequence is ATP synthase subunit delta (278 aa).

This sequence belongs to the ATPase delta chain family. In terms of assembly, F-type ATPases have 2 components, F(1) - the catalytic core - and F(0) - the membrane proton channel. F(1) has five subunits: alpha(3), beta(3), gamma(1), delta(1), epsilon(1). F(0) has three main subunits: a(1), b(2) and c(10-14). The alpha and beta chains form an alternating ring which encloses part of the gamma chain. F(1) is attached to F(0) by a central stalk formed by the gamma and epsilon chains, while a peripheral stalk is formed by the delta and b chains.

It localises to the cell membrane. F(1)F(0) ATP synthase produces ATP from ADP in the presence of a proton or sodium gradient. F-type ATPases consist of two structural domains, F(1) containing the extramembraneous catalytic core and F(0) containing the membrane proton channel, linked together by a central stalk and a peripheral stalk. During catalysis, ATP synthesis in the catalytic domain of F(1) is coupled via a rotary mechanism of the central stalk subunits to proton translocation. Functionally, this protein is part of the stalk that links CF(0) to CF(1). It either transmits conformational changes from CF(0) to CF(1) or is implicated in proton conduction. This chain is ATP synthase subunit delta, found in Rhodococcus opacus (strain B4).